A 93-amino-acid chain; its full sequence is Alpha-defensin 9 (93 aa).

The N-terminal stretch at 1 to 19 (MKTLVLLSALVLLAFQVQA) is a signal peptide. A propeptide spanning residues 20–58 (DPIQNTDEETKTEEQPGEEDQAVSVSFGDPEGSSLQEES) is cleaved from the precursor. The tract at residues 23-56 (QNTDEETKTEEQPGEEDQAVSVSFGDPEGSSLQE) is disordered. Disulfide bonds link C64-C92, C66-C81, and C71-C91.

This sequence belongs to the alpha-defensin family. In terms of tissue distribution, paneth cells of the small bowel.

It localises to the secreted. Functionally, probably contributes to the antimicrobial barrier function of the small bowel mucosa. This Mus musculus (Mouse) protein is Alpha-defensin 9 (Defa9).